An 89-amino-acid chain; its full sequence is Small ribosomal subunit protein uS15 (89 aa).

Belongs to the universal ribosomal protein uS15 family. As to quaternary structure, part of the 30S ribosomal subunit. Forms a bridge to the 50S subunit in the 70S ribosome, contacting the 23S rRNA.

In terms of biological role, one of the primary rRNA binding proteins, it binds directly to 16S rRNA where it helps nucleate assembly of the platform of the 30S subunit by binding and bridging several RNA helices of the 16S rRNA. Forms an intersubunit bridge (bridge B4) with the 23S rRNA of the 50S subunit in the ribosome. This chain is Small ribosomal subunit protein uS15, found in Renibacterium salmoninarum (strain ATCC 33209 / DSM 20767 / JCM 11484 / NBRC 15589 / NCIMB 2235).